The sequence spans 1486 residues: Chromosome partition protein MukB (1486 aa).

Residue 34-41 participates in ATP binding; that stretch reads GGNGAGKS. 3 coiled-coil regions span residues 326-418, 444-480, and 509-603; these read LEAD…QYNQ, LETF…QAYQ, and RHLA…RAPV. A flexible hinge region spans residues 666–783; sequence PGGSEDQRLN…EVPLFGRAAR (118 aa). Coiled-coil stretches lie at residues 835–923, 977–1115, and 1209–1266; these read EAEI…AKLE, EMLS…TAKA, and VEAI…QNVS.

The protein belongs to the SMC family. MukB subfamily. Homodimerization via its hinge domain. Binds to DNA via its C-terminal region. Interacts, and probably forms a ternary complex, with MukE and MukF via its C-terminal region. The complex formation is stimulated by calcium or magnesium. Interacts with tubulin-related protein FtsZ.

Its subcellular location is the cytoplasm. The protein resides in the nucleoid. Plays a central role in chromosome condensation, segregation and cell cycle progression. Functions as a homodimer, which is essential for chromosome partition. Involved in negative DNA supercoiling in vivo, and by this means organize and compact chromosomes. May achieve or facilitate chromosome segregation by condensation DNA from both sides of a centrally located replisome during cell division. This chain is Chromosome partition protein MukB, found in Escherichia coli O1:K1 / APEC.